The primary structure comprises 143 residues: Sirohydrochlorin cobaltochelatase (143 aa).

His9 functions as the Proton acceptor in the catalytic mechanism. His9 lines the Co(2+) pocket. His9 lines the Ni(2+) pocket. Residues Glu45 and 70 to 75 (LAHGNH) contribute to the substrate site. Residue His75 coordinates Co(2+). His75 contributes to the Ni(2+) binding site.

This sequence belongs to the CbiX family. CbiXS subfamily. Homotetramer; dimer of dimers.

It carries out the reaction Co-sirohydrochlorin + 2 H(+) = sirohydrochlorin + Co(2+). The enzyme catalyses Ni-sirohydrochlorin + 2 H(+) = sirohydrochlorin + Ni(2+). It functions in the pathway cofactor biosynthesis; adenosylcobalamin biosynthesis; cob(II)yrinate a,c-diamide from sirohydrochlorin (anaerobic route): step 1/10. Its function is as follows. Catalyzes the insertion of Co(2+) into sirohydrochlorin as part of the anaerobic pathway to cobalamin biosynthesis. Involved in the biosynthesis of the unique nickel-containing tetrapyrrole coenzyme F430, the prosthetic group of methyl-coenzyme M reductase (MCR), which plays a key role in methanogenesis and anaerobic methane oxidation. Catalyzes the insertion of Ni(2+) into sirohydrochlorin to yield Ni-sirohydrochlorin. The polypeptide is Sirohydrochlorin cobaltochelatase (Methanococcus aeolicus (strain ATCC BAA-1280 / DSM 17508 / OCM 812 / Nankai-3)).